Here is an 879-residue protein sequence, read N- to C-terminus: Paramyosin, long form (879 aa).

The segment at 1 to 31 (MSSSQAVRSSKYSYRATSTGPGTADVNIEYI) is nonhelical region. Position 18 is a phosphoserine (Ser-18). Residues 32-858 (QDLSSLSRLE…IIRAKHRTFV (827 aa)) are a coiled coil. Residues 859-879 (TTSTVPGSQVYIQETTRTITE) are nonhelical region.

It belongs to the paramyosin family. As to quaternary structure, heterodimer of two isoforms. Post-translationally, the more-acidic and less-abundant isoform is phosphorylated. Expressed in all larval and adult muscle tissues. Expression is five times higher in tubular than in fibrillar muscles.

The protein localises to the cytoplasm. The protein resides in the myofibril. Its function is as follows. Paramyosin is a major structural component of many thick filaments isolated from invertebrate muscles. In Drosophila melanogaster (Fruit fly), this protein is Paramyosin, long form (Prm).